Consider the following 158-residue polypeptide: NADH-quinone oxidoreductase subunit B 1 (158 aa).

4 residues coordinate [4Fe-4S] cluster: Cys-37, Cys-38, Cys-102, and Cys-132.

This sequence belongs to the complex I 20 kDa subunit family. As to quaternary structure, NDH-1 is composed of 14 different subunits. Subunits NuoB, C, D, E, F, and G constitute the peripheral sector of the complex. [4Fe-4S] cluster serves as cofactor.

The protein resides in the cell inner membrane. It catalyses the reaction a quinone + NADH + 5 H(+)(in) = a quinol + NAD(+) + 4 H(+)(out). In terms of biological role, NDH-1 shuttles electrons from NADH, via FMN and iron-sulfur (Fe-S) centers, to quinones in the respiratory chain. Couples the redox reaction to proton translocation (for every two electrons transferred, four hydrogen ions are translocated across the cytoplasmic membrane), and thus conserves the redox energy in a proton gradient. The sequence is that of NADH-quinone oxidoreductase subunit B 1 from Chromobacterium violaceum (strain ATCC 12472 / DSM 30191 / JCM 1249 / CCUG 213 / NBRC 12614 / NCIMB 9131 / NCTC 9757 / MK).